The sequence spans 251 residues: Probable transcriptional regulatory protein MSMEG_2940/MSMEI_2866 (251 aa).

Belongs to the TACO1 family.

Its subcellular location is the cytoplasm. The chain is Probable transcriptional regulatory protein MSMEG_2940/MSMEI_2866 from Mycolicibacterium smegmatis (strain ATCC 700084 / mc(2)155) (Mycobacterium smegmatis).